Reading from the N-terminus, the 127-residue chain is Cold-regulated protein 1 (127 aa).

The disordered stretch occupies residues 39–127 (ARGPPPSPAP…WTRPRMARAR (89 aa)). Positions 85–101 (SRRRRRRRATRRARSRM) are enriched in basic residues. The segment covering 102–121 (PRTTPWRAPRAPARAWWTRP) has biased composition (low complexity).

The polypeptide is Cold-regulated protein 1 (Hordeum vulgare (Barley)).